The primary structure comprises 586 residues: MTITKLAWRDLVPDTDSYQEIFAQPHLIDENDPLFSDTQPRLQFALEQLLHTRASSSFMLAKAPEESEYLNLIANAARTLQSDAGQLVGGHYEVSGHSIRLRHAVSADDNFATLTQVVAADWVEAEQLFGCLRQFNGDITLQPGLVHQANGGILIISLRTLLAQPLLWMRLKNIVNRERFDWVAFDESRPLPVSVPSMPLKLKVILVGERESLADFQEMEPELSEQAIYSEFEDTLQIVDAESVTQWCRWVTFTARHNHLPAPGADAWPILIREAARYTGEQETLPLSPQWILRQCKEVASLCDGDTFSGEQLNLMLQQREWREGFLAERMQDEILQEQILIETEGERIGQINALSVIEFPGHPRAFGEPSRISCVVHIGDGEFTDIERKAELGGNIHAKGMMIMQAFLMSELQLEQQIPFSASLTFEQSYSEVDGDSASMAELCALISALADVPVNQSIAITGSVDQFGRAQPVGGLNEKIEGFFAICQQRELTGKQGVIIPTANVRHLSLHSELVKAVEEGKFTIWAVDDVTDALPLLLNLVWDGEGQTTLMQTIQERIAQASQQEGRHRFPWPLRWLNWFIPN.

Residues 346–543 (GERIGQINAL…TDALPLLLNL (198 aa)) enclose the Lon proteolytic domain. Residues Ser438 and Lys481 contribute to the active site.

Belongs to the peptidase S16 family.

This Escherichia coli (strain K12) protein is Putative Lon protease homolog (ycbZ).